A 380-amino-acid polypeptide reads, in one-letter code: Cyclohexane-1-carbonyl-CoA dehydrogenase (380 aa).

This sequence belongs to the acyl-CoA dehydrogenase family. As to quaternary structure, homotetramer. It depends on FAD as a cofactor.

It carries out the reaction cyclohexane-1-carbonyl-CoA + oxidized [electron-transfer flavoprotein] + H(+) = cyclohex-1-ene-1-carbonyl-CoA + reduced [electron-transfer flavoprotein]. Functionally, acyl-CoA dehydrogenase involved in the anaerobic degradation of cyclohexane carboxylic acid (CHC). Catalyzes the 1,2-dehydrogenation of cyclohexane-1-carbonyl-CoA (CHCoA) to cyclohex-1-ene-1-carbonyl-CoA (CHeneCoA). An alternative substrate, cyclohex-3-ene-1-carboxyl-CoA can be converted to the corresponding cyclohexadiene-1-carboxyl-CoA isomers (30% rate compared to CHC). In Geobacter metallireducens (strain ATCC 53774 / DSM 7210 / GS-15), this protein is Cyclohexane-1-carbonyl-CoA dehydrogenase.